Reading from the N-terminus, the 85-residue chain is Latartoxin-1a (85 aa).

Residues 1–19 form the signal peptide; it reads MKVLVFAIVCSVLLQVVLS. The propeptide at 20 to 25 is removed in mature form; sequence ADEEAR. The Processing quadruplet motif motif lies at 22–25; the sequence is EEAR. Cystine bridges form between Cys27-Cys42, Cys34-Cys47, Cys41-Cys64, and Cys49-Cys62.

It belongs to the neurotoxin 19 (CSTX) family. In terms of processing, contains 4 disulfide bonds. Cleavage of the propeptide depends on the processing quadruplet motif (XXXR, with at least one of X being E). In terms of tissue distribution, expressed by the venom gland.

It localises to the secreted. Insect toxin. Causes paralysis in larvae of C.vicina by depolarizing membranes at the neuromuscular junction. The polypeptide is Latartoxin-1a (Lachesana tarabaevi (Spider)).